The sequence spans 83 residues: MLTIRLALGGSKKRPFYHLTVTDSRNPRDGSHKEQVGFFNPIARGQEVRLSVNQERVAYWLSVGAQPSERVAQLLKESAKAAA.

The protein belongs to the bacterial ribosomal protein bS16 family.

The chain is Small ribosomal subunit protein bS16 from Pseudomonas fluorescens (strain ATCC BAA-477 / NRRL B-23932 / Pf-5).